The sequence spans 431 residues: Glutamate-1-semialdehyde 2,1-aminomutase (431 aa).

The residue at position 269 (Lys-269) is an N6-(pyridoxal phosphate)lysine.

Belongs to the class-III pyridoxal-phosphate-dependent aminotransferase family. HemL subfamily. As to quaternary structure, homodimer. Pyridoxal 5'-phosphate is required as a cofactor.

It is found in the cytoplasm. It catalyses the reaction (S)-4-amino-5-oxopentanoate = 5-aminolevulinate. The protein operates within porphyrin-containing compound metabolism; protoporphyrin-IX biosynthesis; 5-aminolevulinate from L-glutamyl-tRNA(Glu): step 2/2. It functions in the pathway porphyrin-containing compound metabolism; chlorophyll biosynthesis. This Chlorobaculum parvum (strain DSM 263 / NCIMB 8327) (Chlorobium vibrioforme subsp. thiosulfatophilum) protein is Glutamate-1-semialdehyde 2,1-aminomutase.